The sequence spans 337 residues: Glyceraldehyde-3-phosphate dehydrogenase (337 aa).

NAD(+) is bound by residues 12 to 13, Asp-36, Arg-80, and Ser-122; that span reads RI. Residues 153-155 and Thr-184 each bind D-glyceraldehyde 3-phosphate; that span reads SCT. Catalysis depends on Cys-154, which acts as the Nucleophile. Position 185 (Asn-185) interacts with NAD(+). Residues Arg-199, 212–213, and Arg-235 contribute to the D-glyceraldehyde 3-phosphate site; that span reads TG. Asn-318 is an NAD(+) binding site.

The protein belongs to the glyceraldehyde-3-phosphate dehydrogenase family. In terms of assembly, homotetramer.

The protein localises to the cytoplasm. It catalyses the reaction D-glyceraldehyde 3-phosphate + phosphate + NAD(+) = (2R)-3-phospho-glyceroyl phosphate + NADH + H(+). It functions in the pathway carbohydrate degradation; glycolysis; pyruvate from D-glyceraldehyde 3-phosphate: step 1/5. In terms of biological role, catalyzes the oxidative phosphorylation of glyceraldehyde 3-phosphate (G3P) to 1,3-bisphosphoglycerate (BPG) using the cofactor NAD. The first reaction step involves the formation of a hemiacetal intermediate between G3P and a cysteine residue, and this hemiacetal intermediate is then oxidized to a thioester, with concomitant reduction of NAD to NADH. The reduced NADH is then exchanged with the second NAD, and the thioester is attacked by a nucleophilic inorganic phosphate to produce BPG. The protein is Glyceraldehyde-3-phosphate dehydrogenase (gap) of Zymomonas mobilis subsp. mobilis (strain ATCC 31821 / ZM4 / CP4).